The following is a 124-amino-acid chain: Protein TAR1 (124 aa).

Positions 80–124 (KNRTPRHTGFSPSMTSCSKEHRQGTAPKLPSPNYNSGTEGTRFQI) are disordered. A compositionally biased stretch (polar residues) spans 111-124 (PNYNSGTEGTRFQI).

It is found in the mitochondrion. May be involved in mtDNA stability or mitochondrial gene expression regulation at the post-transcriptional level. In Saccharomyces cerevisiae (strain ATCC 204508 / S288c) (Baker's yeast), this protein is Protein TAR1 (TAR1).